Here is a 547-residue protein sequence, read N- to C-terminus: Glucose-6-phosphate isomerase 2 (547 aa).

Glu-351 serves as the catalytic Proton donor. Catalysis depends on residues His-382 and Lys-508.

This sequence belongs to the GPI family.

The protein localises to the cytoplasm. It carries out the reaction alpha-D-glucose 6-phosphate = beta-D-fructose 6-phosphate. The protein operates within carbohydrate biosynthesis; gluconeogenesis. It participates in carbohydrate degradation; glycolysis; D-glyceraldehyde 3-phosphate and glycerone phosphate from D-glucose: step 2/4. In terms of biological role, catalyzes the reversible isomerization of glucose-6-phosphate to fructose-6-phosphate. This chain is Glucose-6-phosphate isomerase 2, found in Neisseria gonorrhoeae (strain ATCC 700825 / FA 1090).